The following is a 720-amino-acid chain: Methionine--tRNA ligase (720 aa).

Residues 27–37 (PYANGQIHIGH) carry the 'HIGH' region motif. 4 residues coordinate Zn(2+): Cys-158, Cys-161, Cys-171, and Cys-174. The 'KMSKS' region signature appears at 348–352 (KMSKS). Lys-351 contacts ATP. Residues 614–720 (DFAKIDLRIA…SGAKPGMRVK (107 aa)) enclose the tRNA-binding domain.

Belongs to the class-I aminoacyl-tRNA synthetase family. MetG type 1 subfamily. Homodimer. It depends on Zn(2+) as a cofactor.

The protein localises to the cytoplasm. It catalyses the reaction tRNA(Met) + L-methionine + ATP = L-methionyl-tRNA(Met) + AMP + diphosphate. Its function is as follows. Is required not only for elongation of protein synthesis but also for the initiation of all mRNA translation through initiator tRNA(fMet) aminoacylation. In Burkholderia lata (strain ATCC 17760 / DSM 23089 / LMG 22485 / NCIMB 9086 / R18194 / 383), this protein is Methionine--tRNA ligase.